Reading from the N-terminus, the 211-residue chain is Small ribosomal subunit protein uS5 (211 aa).

One can recognise an S5 DRBM domain in the interval 51-114 (LKHEVLDVSL…ANAKLNITPV (64 aa)).

This sequence belongs to the universal ribosomal protein uS5 family. In terms of assembly, part of the 30S ribosomal subunit. Contacts protein S4.

With S4 and S12 plays an important role in translational accuracy. The polypeptide is Small ribosomal subunit protein uS5 (Ignicoccus hospitalis (strain KIN4/I / DSM 18386 / JCM 14125)).